The primary structure comprises 177 residues: Crossover junction endodeoxyribonuclease RuvC (177 aa).

Catalysis depends on residues Asp-7, Glu-68, and Asp-141. Mg(2+)-binding residues include Asp-7, Glu-68, and Asp-141.

Belongs to the RuvC family. In terms of assembly, homodimer which binds Holliday junction (HJ) DNA. The HJ becomes 2-fold symmetrical on binding to RuvC with unstacked arms; it has a different conformation from HJ DNA in complex with RuvA. In the full resolvosome a probable DNA-RuvA(4)-RuvB(12)-RuvC(2) complex forms which resolves the HJ. The cofactor is Mg(2+).

The protein resides in the cytoplasm. It catalyses the reaction Endonucleolytic cleavage at a junction such as a reciprocal single-stranded crossover between two homologous DNA duplexes (Holliday junction).. In terms of biological role, the RuvA-RuvB-RuvC complex processes Holliday junction (HJ) DNA during genetic recombination and DNA repair. Endonuclease that resolves HJ intermediates. Cleaves cruciform DNA by making single-stranded nicks across the HJ at symmetrical positions within the homologous arms, yielding a 5'-phosphate and a 3'-hydroxyl group; requires a central core of homology in the junction. The consensus cleavage sequence is 5'-(A/T)TT(C/G)-3'. Cleavage occurs on the 3'-side of the TT dinucleotide at the point of strand exchange. HJ branch migration catalyzed by RuvA-RuvB allows RuvC to scan DNA until it finds its consensus sequence, where it cleaves and resolves the cruciform DNA. The sequence is that of Crossover junction endodeoxyribonuclease RuvC from Nocardioides sp. (strain ATCC BAA-499 / JS614).